The chain runs to 616 residues: Probable methyltransferase PMT2 (616 aa).

Topologically, residues 1–13 (MALKSSSADGKTR) are cytoplasmic. Residues 14–34 (SSVQIFIVFSLCCFFYILGAW) form a helical; Signal-anchor for type II membrane protein membrane-spanning segment. Topologically, residues 35–616 (QRSGFGKGDS…YWVTNSTSTH (582 aa)) are lumenal. Residues N205 and N611 are each glycosylated (N-linked (GlcNAc...) asparagine).

It belongs to the methyltransferase superfamily.

The protein localises to the golgi apparatus membrane. This Arabidopsis thaliana (Mouse-ear cress) protein is Probable methyltransferase PMT2.